We begin with the raw amino-acid sequence, 230 residues long: Large ribosomal subunit protein uL1 (230 aa).

Belongs to the universal ribosomal protein uL1 family. Part of the 50S ribosomal subunit.

Functionally, binds directly to 23S rRNA. The L1 stalk is quite mobile in the ribosome, and is involved in E site tRNA release. Its function is as follows. Protein L1 is also a translational repressor protein, it controls the translation of the L11 operon by binding to its mRNA. This Desulfitobacterium hafniense (strain DSM 10664 / DCB-2) protein is Large ribosomal subunit protein uL1.